Here is a 414-residue protein sequence, read N- to C-terminus: 3-isopropylmalate dehydratase large subunit (414 aa).

Residues Cys295, Cys353, and Cys356 each coordinate [4Fe-4S] cluster.

This sequence belongs to the aconitase/IPM isomerase family. LeuC type 2 subfamily. In terms of assembly, heterodimer of LeuC and LeuD. The cofactor is [4Fe-4S] cluster.

It carries out the reaction (2R,3S)-3-isopropylmalate = (2S)-2-isopropylmalate. It participates in amino-acid biosynthesis; L-leucine biosynthesis; L-leucine from 3-methyl-2-oxobutanoate: step 2/4. In terms of biological role, catalyzes the isomerization between 2-isopropylmalate and 3-isopropylmalate, via the formation of 2-isopropylmaleate. This is 3-isopropylmalate dehydratase large subunit from Pyrobaculum islandicum (strain DSM 4184 / JCM 9189 / GEO3).